The following is a 263-amino-acid chain: Endonuclease 8 (263 aa).

The Schiff-base intermediate with DNA role is filled by proline 2. The active-site Proton donor is the glutamate 3. Catalysis depends on lysine 53, which acts as the Proton donor; for beta-elimination activity. Positions 70, 125, and 169 each coordinate DNA. The FPG-type zinc finger occupies 229 to 263 (KLFHRDGEACERCGGIIEKTTLSSRPFYWCPHCQK). Arginine 253 functions as the Proton donor; for delta-elimination activity in the catalytic mechanism.

This sequence belongs to the FPG family. Zn(2+) is required as a cofactor.

The catalysed reaction is 2'-deoxyribonucleotide-(2'-deoxyribose 5'-phosphate)-2'-deoxyribonucleotide-DNA = a 3'-end 2'-deoxyribonucleotide-(2,3-dehydro-2,3-deoxyribose 5'-phosphate)-DNA + a 5'-end 5'-phospho-2'-deoxyribonucleoside-DNA + H(+). Functionally, involved in base excision repair of DNA damaged by oxidation or by mutagenic agents. Acts as a DNA glycosylase that recognizes and removes damaged bases. Has a preference for oxidized pyrimidines, such as thymine glycol, 5,6-dihydrouracil and 5,6-dihydrothymine. Has AP (apurinic/apyrimidinic) lyase activity and introduces nicks in the DNA strand. Cleaves the DNA backbone by beta-delta elimination to generate a single-strand break at the site of the removed base with both 3'- and 5'-phosphates. This is Endonuclease 8 from Salmonella typhimurium (strain SL1344).